The chain runs to 422 residues: MDVLSPGQGNNTTSPPAPFETGGNTTGISDVTFSYQVITSLLLGTLIFCAVLGNACVVAAIALERSLQNVANYLIGSLAVTDLMVSVLVLPMAALYQVLNKWTLGQVTCDLFIALDVLCCTSSILHLCAIALDRYWAITDPIDYVNKRTPRRAAALISLTWLIGFLISIPPMLGWRTPEDRSDPDACTISKDHGYTIYSTFGAFYIPLLLMLVLYGRIFRAARFRIRKTVKKVEKTGADTHHGASPAPQPKKSVNGESGSRNWRLGVESKAGGGLCANGAVRQGDDGAALEVIEVHRVGNSKEHLPLPSEAGPTPCAPASFERKNERNAEAKRKMALARERKTVKTLGIIMGTFILCWLPFFIVALVLPFCESSCHMPTLLGAIINWLGYSNSLLNPVIYAYFNKDFQNAFKKIIKCKFCRQ.

The tract at residues 1-23 is disordered; sequence MDVLSPGQGNNTTSPPAPFETGG. At 1 to 38 the chain is on the extracellular side; the sequence is MDVLSPGQGNNTTSPPAPFETGGNTTGISDVTFSYQVI. 3 N-linked (GlcNAc...) asparagine glycosylation sites follow: asparagine 10, asparagine 11, and asparagine 24. Residues 39–59 traverse the membrane as a helical segment; the sequence is TSLLLGTLIFCAVLGNACVVA. Residues 60 to 73 lie on the Cytoplasmic side of the membrane; sequence AIALERSLQNVANY. The helical transmembrane segment at 74–98 threads the bilayer; the sequence is LIGSLAVTDLMVSVLVLPMAALYQV. Topologically, residues 99–107 are extracellular; sequence LNKWTLGQV. A helical transmembrane segment spans residues 108-132; it reads TCDLFIALDVLCCTSSILHLCAIAL. The cysteines at positions 109 and 187 are disulfide-linked. The serotonin site is built by aspartate 116 and cysteine 120. The short motif at 133–135 is the DRY motif; important for ligand-induced conformation changes element; sequence DRY. Residues 133 to 152 are Cytoplasmic-facing; sequence DRYWAITDPIDYVNKRTPRR. Residues 153-174 traverse the membrane as a helical segment; the sequence is AAALISLTWLIGFLISIPPMLG. The Extracellular segment spans residues 175–193; it reads WRTPEDRSDPDACTISKDH. The chain crosses the membrane as a helical span at residues 194–216; that stretch reads GYTIYSTFGAFYIPLLLMLVLYG. The Cytoplasmic segment spans residues 217–346; that stretch reads RIFRAARFRI…LARERKTVKT (130 aa). The segment at 235–263 is disordered; the sequence is KTGADTHHGASPAPQPKKSVNGESGSRNW. 1D-myo-inositol 4-phosphate is bound by residues threonine 314, lysine 345, threonine 346, and glycine 352. A helical transmembrane segment spans residues 347-370; that stretch reads LGIIMGTFILCWLPFFIVALVLPF. Residues 371 to 378 lie on the Extracellular side of the membrane; sequence CESSCHMP. Residues 379-403 form a helical membrane-spanning segment; it reads TLLGAIINWLGYSNSLLNPVIYAYF. The short motif at 396–400 is the NPxxY motif; important for ligand-induced conformation changes and signaling element; sequence NPVIY. Residues phenylalanine 403, asparagine 404, and lysine 405 each coordinate 1D-myo-inositol 4-phosphate. Residues 404–422 are Cytoplasmic-facing; the sequence is NKDFQNAFKKIIKCKFCRQ.

It belongs to the G-protein coupled receptor 1 family. 5-hydroxytryptamine receptor subfamily. HTR1A sub-subfamily. In terms of assembly, heterodimer; heterodimerizes with GPER1. Interacts with YIF1B. Interacts with GPR39 and GALR1.

It localises to the cell membrane. The protein resides in the cell projection. The protein localises to the dendrite. With respect to regulation, G-protein coupled receptor activity is regulated by lipids: phosphatidylinositol 4-phosphate increases HTR1A-mediated activity. Functionally, G-protein coupled receptor for 5-hydroxytryptamine (serotonin). Also functions as a receptor for various drugs and psychoactive substances. Ligand binding causes a conformation change that triggers signaling via guanine nucleotide-binding proteins (G proteins) and modulates the activity of downstream effectors, such as adenylate cyclase. HTR1A is coupled to G(i)/G(o) G alpha proteins and mediates inhibitory neurotransmission: signaling inhibits adenylate cyclase activity and activates a phosphatidylinositol-calcium second messenger system that regulates the release of Ca(2+) ions from intracellular stores. Beta-arrestin family members regulate signaling by mediating both receptor desensitization and resensitization processes. In Pongo pygmaeus (Bornean orangutan), this protein is 5-hydroxytryptamine receptor 1A (HTR1A).